Here is a 129-residue protein sequence, read N- to C-terminus: Small ribosomal subunit protein uS11 (129 aa).

It belongs to the universal ribosomal protein uS11 family. As to quaternary structure, part of the 30S ribosomal subunit. Interacts with proteins S7 and S18. Binds to IF-3.

In terms of biological role, located on the platform of the 30S subunit, it bridges several disparate RNA helices of the 16S rRNA. Forms part of the Shine-Dalgarno cleft in the 70S ribosome. The polypeptide is Small ribosomal subunit protein uS11 (Rhodopseudomonas palustris (strain BisB18)).